Reading from the N-terminus, the 573-residue chain is Myrcene synthase TPS5FN (573 aa).

The (2E)-geranyl diphosphate site is built by arginine 286, aspartate 323, aspartate 327, arginine 464, and aspartate 467. Mg(2+) contacts are provided by aspartate 323 and aspartate 327. Positions 323-327 (DDIFD) match the DDXXD motif motif. Aspartate 467, threonine 471, and glutamate 475 together coordinate Mg(2+).

This sequence belongs to the terpene synthase family. Tpsb subfamily. The cofactor is Mg(2+). It depends on Mn(2+) as a cofactor. As to expression, expressed in glandular trichomes two to four weeks after flowering onset.

The catalysed reaction is (2E)-geranyl diphosphate = beta-myrcene + diphosphate. It carries out the reaction (2E)-geranyl diphosphate = (1R,5R)-alpha-pinene + diphosphate. The enzyme catalyses (2E)-geranyl diphosphate = sabinene + diphosphate. It catalyses the reaction (2E)-geranyl diphosphate = (4S)-limonene + diphosphate. The catalysed reaction is (2E)-geranyl diphosphate = terpinolene + diphosphate. It carries out the reaction (2E)-geranyl diphosphate = camphene + diphosphate. The protein operates within secondary metabolite biosynthesis; terpenoid biosynthesis. Involved in monoterpene (C10) olefins biosynthesis, constituants of cannabinoids and terpenoids-rich resins. Catalyzes mainly the conversion of (2E)-geranyl diphosphate to beta-myrcene, and also produces minor products such as alpha-pinene, camphene, sabinene, limonene and terpinolene. The chain is Myrcene synthase TPS5FN from Cannabis sativa (Hemp).